The following is a 78-amino-acid chain: Large ribosomal subunit protein bL28 (78 aa).

Residues methionine 1–histidine 20 form a disordered region.

The protein belongs to the bacterial ribosomal protein bL28 family.

In Actinobacillus succinogenes (strain ATCC 55618 / DSM 22257 / CCUG 43843 / 130Z), this protein is Large ribosomal subunit protein bL28.